Here is a 345-residue protein sequence, read N- to C-terminus: Platelet-derived growth factor C (345 aa).

The first 22 residues, 1–22, serve as a signal peptide directing secretion; that stretch reads MLLLGLLLLTSALAGQRTGTRA. Residues 24 to 33 are compositionally biased toward polar residues; sequence SNLSSKLQLS. The tract at residues 24–45 is disordered; that stretch reads SNLSSKLQLSSDKEQNGVQDPR. N-linked (GlcNAc...) asparagine glycosylation occurs at Asn-25. Basic and acidic residues predominate over residues 34–45; sequence SDKEQNGVQDPR. Residues 46–163 form the CUB domain; the sequence is HERVVTISGN…PGFCIHYSII (118 aa). N-linked (GlcNAc...) asparagine glycosylation occurs at Asn-55. Intrachain disulfides connect Cys-104/Cys-124, Cys-250/Cys-294, Cys-280/Cys-335, and Cys-287/Cys-337.

The protein belongs to the PDGF/VEGF growth factor family. As to quaternary structure, homodimer; disulfide-linked. Interacts with PDGFRA homodimers, and with heterodimers formed by PDGFRA and PDGFRB. Interacts (via CUB domain) with PLAT (via kringle domain). Post-translationally, proteolytic removal of the N-terminal CUB domain releasing the core domain is necessary for unmasking the receptor-binding epitopes of the core domain. Cleavage after basic residues in the hinge region (region connecting the CUB and growth factor domains) gives rise to the receptor-binding form. Cleaved by PLAT and PLG. In terms of processing, sumoylated with SUMO1. N-glycosylated. As to expression, highly expressed in the kidney and adrenal gland. In the kidney, it is expressed in arteriolar smooth muscle cells and in epithelial cells of individual segments (at protein level).

The protein resides in the cytoplasm. Its subcellular location is the cytosol. It localises to the secreted. It is found in the nucleus. The protein localises to the cytoplasmic granule. The protein resides in the cell membrane. In terms of biological role, growth factor that plays an essential role in the regulation of embryonic development, cell proliferation, cell migration, survival and chemotaxis. Potent mitogen and chemoattractant for cells of mesenchymal origin. Required for normal skeleton formation during embryonic development, especially for normal development of the craniofacial skeleton and for normal development of the palate. Required for normal skin morphogenesis during embryonic development. Plays an important role in wound healing, where it appears to be involved in three stages: inflammation, proliferation and remodeling. Plays an important role in angiogenesis and blood vessel development. Involved in fibrotic processes, in which transformation of interstitial fibroblasts into myofibroblasts plus collagen deposition occurs. The CUB domain has mitogenic activity in coronary artery smooth muscle cells, suggesting a role beyond the maintenance of the latency of the PDGF domain. In the nucleus, PDGFC seems to have additional function. The sequence is that of Platelet-derived growth factor C (Pdgfc) from Rattus norvegicus (Rat).